The following is a 552-amino-acid chain: DNA ligase (552 aa).

ATP is bound at residue Glu229. Residue Lys231 is the N6-AMP-lysine intermediate of the active site. Arg236 and Glu283 together coordinate ATP. Residues Glu283 and Glu377 each coordinate Mg(2+). ATP-binding residues include Lys382 and Lys397.

It belongs to the ATP-dependent DNA ligase family. As to quaternary structure, interacts with host TOP2A and TOP2B. Mg(2+) serves as cofactor.

It localises to the host cytoplasm. It carries out the reaction ATP + (deoxyribonucleotide)n-3'-hydroxyl + 5'-phospho-(deoxyribonucleotide)m = (deoxyribonucleotide)n+m + AMP + diphosphate.. DNA ligase that seals nicks in double-stranded DNA during DNA replication, DNA recombination and DNA repair. Recruits cellular topoisomerase II to sites of viral replication and assembly. The polypeptide is DNA ligase (OPG180) (Vaccinia virus (strain Ankara) (VACV)).